A 286-amino-acid polypeptide reads, in one-letter code: ATP synthase gamma chain (286 aa).

Belongs to the ATPase gamma chain family. F-type ATPases have 2 components, CF(1) - the catalytic core - and CF(0) - the membrane proton channel. CF(1) has five subunits: alpha(3), beta(3), gamma(1), delta(1), epsilon(1). CF(0) has three main subunits: a, b and c.

Its subcellular location is the cell inner membrane. In terms of biological role, produces ATP from ADP in the presence of a proton gradient across the membrane. The gamma chain is believed to be important in regulating ATPase activity and the flow of protons through the CF(0) complex. The chain is ATP synthase gamma chain from Shewanella woodyi (strain ATCC 51908 / MS32).